We begin with the raw amino-acid sequence, 131 residues long: Transcriptional activatory protein CaiF (131 aa).

Functionally, potential transcriptional activator of carnitine metabolism. This chain is Transcriptional activatory protein CaiF (caiF), found in Escherichia coli (strain K12).